A 459-amino-acid chain; its full sequence is Phosphomethylpyrimidine synthase (459 aa).

Substrate is bound by residues asparagine 80, methionine 109, tyrosine 139, histidine 175, 195 to 197 (SRG), 236 to 239 (DSLR), and glutamate 275. Histidine 279 contacts Zn(2+). Tyrosine 302 lines the substrate pocket. Histidine 343 serves as a coordination point for Zn(2+). Residues cysteine 423, cysteine 426, and cysteine 431 each coordinate [4Fe-4S] cluster.

It belongs to the ThiC family. It depends on [4Fe-4S] cluster as a cofactor.

The enzyme catalyses 5-amino-1-(5-phospho-beta-D-ribosyl)imidazole + S-adenosyl-L-methionine = 4-amino-2-methyl-5-(phosphooxymethyl)pyrimidine + CO + 5'-deoxyadenosine + formate + L-methionine + 3 H(+). The protein operates within cofactor biosynthesis; thiamine diphosphate biosynthesis. Functionally, catalyzes the synthesis of the hydroxymethylpyrimidine phosphate (HMP-P) moiety of thiamine from aminoimidazole ribotide (AIR) in a radical S-adenosyl-L-methionine (SAM)-dependent reaction. This chain is Phosphomethylpyrimidine synthase, found in Prochlorococcus marinus (strain MIT 9303).